The sequence spans 334 residues: Beta-glucanase (334 aa).

A signal peptide spans 1–27 (MKNRVISLLMASLLLVLSVIVAPFYKA). The GH16 domain occupies 28 to 248 (EAATVVNTPF…YVKYYPNGVP (221 aa)). The Nucleophile role is filled by Glu-136. Residue Glu-140 is the Proton donor of the active site. The interval 246–265 (GVPQDNPTPTPTIAPSTPTN) is disordered. One can recognise a Dockerin domain in the interval 267 to 334 (NLPLKGDVNG…RYLIRAIPSL (68 aa)).

It belongs to the glycosyl hydrolase 16 family.

The enzyme catalyses Hydrolysis of (1-&gt;4)-beta-D-glucosidic linkages in beta-D-glucans containing (1-&gt;3)- and (1-&gt;4)-bonds.. The polypeptide is Beta-glucanase (licB) (Acetivibrio thermocellus (Hungateiclostridium thermocellum)).